A 692-amino-acid polypeptide reads, in one-letter code: Elongation factor G (692 aa).

The tr-type G domain occupies 8–282; it reads EKTRNIGIMA…AIVDFLPAPT (275 aa). GTP is bound by residues 17-24, 81-85, and 135-138; these read AHIDAGKT, DTPGH, and NKMD.

It belongs to the TRAFAC class translation factor GTPase superfamily. Classic translation factor GTPase family. EF-G/EF-2 subfamily.

The protein localises to the cytoplasm. Its function is as follows. Catalyzes the GTP-dependent ribosomal translocation step during translation elongation. During this step, the ribosome changes from the pre-translocational (PRE) to the post-translocational (POST) state as the newly formed A-site-bound peptidyl-tRNA and P-site-bound deacylated tRNA move to the P and E sites, respectively. Catalyzes the coordinated movement of the two tRNA molecules, the mRNA and conformational changes in the ribosome. The chain is Elongation factor G from Moorella thermoacetica (strain ATCC 39073 / JCM 9320).